A 61-amino-acid polypeptide reads, in one-letter code: Small ribosomal subunit protein uS14 (61 aa).

The Zn(2+) site is built by Cys24, Cys27, Cys40, and Cys43.

This sequence belongs to the universal ribosomal protein uS14 family. Zinc-binding uS14 subfamily. Part of the 30S ribosomal subunit. Contacts proteins S3 and S10. The cofactor is Zn(2+).

Its function is as follows. Binds 16S rRNA, required for the assembly of 30S particles and may also be responsible for determining the conformation of the 16S rRNA at the A site. This chain is Small ribosomal subunit protein uS14, found in Ruminiclostridium cellulolyticum (strain ATCC 35319 / DSM 5812 / JCM 6584 / H10) (Clostridium cellulolyticum).